The sequence spans 907 residues: Aldehyde oxidoreductase (907 aa).

A 2Fe-2S ferredoxin-type domain is found at 2-79; it reads IQKVITVNGI…GAQITTIEGV (78 aa). Positions 40, 45, 48, 60, 100, 103, 137, and 139 each coordinate [2Fe-2S] cluster. Residues His-653 and Glu-869 each coordinate Mo-molybdopterin cytosine dinucleotide.

It belongs to the xanthine dehydrogenase family. Homodimer. It depends on Mo-molybdopterin cytosine dinucleotide as a cofactor. [2Fe-2S] cluster serves as cofactor.

The enzyme catalyses an aldehyde + A + H2O = a carboxylate + AH2 + H(+). The polypeptide is Aldehyde oxidoreductase (mop) (Megalodesulfovibrio gigas (Desulfovibrio gigas)).